The following is a 171-amino-acid chain: Transcriptional repressor NrdR (171 aa).

A zinc finger spans residues 3–34 (CPFCGDPNTQVADTRENEGGEVVRRRRRCPKC). Residues 49 to 139 (PHIVKRNGNR…VYRNFADVDE (91 aa)) form the ATP-cone domain. Positions 148-171 (KARPKRNRPAEPPEPTSENDLFRS) are disordered.

It belongs to the NrdR family. It depends on Zn(2+) as a cofactor.

Negatively regulates transcription of bacterial ribonucleotide reductase nrd genes and operons by binding to NrdR-boxes. This is Transcriptional repressor NrdR from Aromatoleum aromaticum (strain DSM 19018 / LMG 30748 / EbN1) (Azoarcus sp. (strain EbN1)).